A 1361-amino-acid chain; its full sequence is DNA-directed RNA polymerase subunit beta'' (1361 aa).

Cysteine 224, cysteine 295, cysteine 302, and cysteine 305 together coordinate Zn(2+).

This sequence belongs to the RNA polymerase beta' chain family. RpoC2 subfamily. In plastids the minimal PEP RNA polymerase catalytic core is composed of four subunits: alpha, beta, beta', and beta''. When a (nuclear-encoded) sigma factor is associated with the core the holoenzyme is formed, which can initiate transcription. Requires Zn(2+) as cofactor.

It is found in the plastid. The protein localises to the chloroplast. It carries out the reaction RNA(n) + a ribonucleoside 5'-triphosphate = RNA(n+1) + diphosphate. Its function is as follows. DNA-dependent RNA polymerase catalyzes the transcription of DNA into RNA using the four ribonucleoside triphosphates as substrates. The chain is DNA-directed RNA polymerase subunit beta'' from Spinacia oleracea (Spinach).